Consider the following 638-residue polypeptide: Phosphomethylpyrimidine synthase (638 aa).

Residues Asn-236, Met-265, Tyr-294, His-330, 350–352 (SRG), 391–394 (DGLR), and Glu-430 each bind substrate. A Zn(2+)-binding site is contributed by His-434. Tyr-457 contributes to the substrate binding site. Zn(2+) is bound at residue His-498. The [4Fe-4S] cluster site is built by Cys-578, Cys-581, and Cys-586. Positions 608–624 (AEGASQQEAEQGMQEMS) are enriched in low complexity. Residues 608 to 633 (AEGASQQEAEQGMQEMSQKYKDAGRR) are disordered.

The protein belongs to the ThiC family. Homodimer. The cofactor is [4Fe-4S] cluster.

The catalysed reaction is 5-amino-1-(5-phospho-beta-D-ribosyl)imidazole + S-adenosyl-L-methionine = 4-amino-2-methyl-5-(phosphooxymethyl)pyrimidine + CO + 5'-deoxyadenosine + formate + L-methionine + 3 H(+). It participates in cofactor biosynthesis; thiamine diphosphate biosynthesis. Catalyzes the synthesis of the hydroxymethylpyrimidine phosphate (HMP-P) moiety of thiamine from aminoimidazole ribotide (AIR) in a radical S-adenosyl-L-methionine (SAM)-dependent reaction. The polypeptide is Phosphomethylpyrimidine synthase (Hahella chejuensis (strain KCTC 2396)).